The following is a 1482-amino-acid chain: Cystic fibrosis transmembrane conductance regulator (1482 aa).

At 1 to 77 the chain is on the cytoplasmic side; it reads MQKSPLERAS…KLINALRRCF (77 aa). Residues 78–98 form a helical membrane-spanning segment; the sequence is FWRFVFYGILLYLGEVTKAVQ. The ABC transmembrane type-1 1 domain maps to 81 to 365; sequence FVFYGILLYL…WAVQTWYDSL (285 aa). The Extracellular segment spans residues 99–122; it reads PLLLGRIIASYDPDNKVERSIAIY. The chain crosses the membrane as a helical span at residues 123-146; the sequence is LAIGLCLLFIVRTLLLHPAIFGLH. Residues 147–195 lie on the Cytoplasmic side of the membrane; sequence HMGMQMRIAMFSLIYKKTLKLSSRVLDKISIGQLVSLLSNNLNKFDEGL. A helical membrane pass occupies residues 196-216; the sequence is ALAHFVWIAPLQVTLLMGLIW. The Extracellular portion of the chain corresponds to 217-222; the sequence is DLLQAS. Residues 223 to 243 traverse the membrane as a helical segment; sequence AFCGLAFLIIVALGQAGLGRM. At 244-298 the chain is on the cytoplasmic side; sequence MMKYRDKRAGKINERLVITSEMIENIQSVKAYCWEEAMEKMIENLRQIELRLTRK. The chain crosses the membrane as a helical span at residues 299–319; that stretch reads AAYVRYFNSAAFFFSGFFVVF. Residues 320-339 are Extracellular-facing; the sequence is LSVLPYAMLKGIILRKIFTT. The chain crosses the membrane as a helical span at residues 340–358; the sequence is ISFCIVLRMAVTRQFPWAV. The Cytoplasmic portion of the chain corresponds to 359 to 858; sequence QTWYDSLGAI…YLRYVTVHKS (500 aa). Residues W401, S434, 458–465, and Q493 each bind ATP; that span reads GSTGAGKT. In terms of domain architecture, ABC transporter 1 spans 423-646; sequence NGDNSLFFSN…RPDFSSELMG (224 aa). C524 is lipidated: S-palmitoyl cysteine. A phosphoserine mark is found at S549 and S660. Residues 654–831 are disordered R region; it reads SAERRNSILT…EEINEEDLKE (178 aa). The residue at position 670 (S670) is a Phosphoserine; by PKA. Phosphoserine is present on S685. K687 participates in a covalent cross-link: Glycyl lysine isopeptide (Lys-Gly) (interchain with G-Cter in ubiquitin). Phosphoserine occurs at positions 699 and 711. T716 is modified (phosphothreonine). S736, S767, S790, S795, and S813 each carry phosphoserine. Residues 859–879 form a helical membrane-spanning segment; that stretch reads LIFVLIWCLVVFLAEVAVSLV. The ABC transmembrane type-1 2 domain occupies 859 to 1156; that stretch reads LIFVLIWCLV…AVNSSIDVDS (298 aa). Over 880 to 919 the chain is Extracellular; it reads VLYLLRTSSLQDKGNNTTVNANSSYGVIVTNTSSYYLLYI. Residues N894, N895, N901, and N910 are each glycosylated (N-linked (GlcNAc...) asparagine). Residues 920–940 form a discontinuously helical membrane-spanning segment; that stretch reads YVGIADSLFALAIFRGLPLVH. The Cytoplasmic portion of the chain corresponds to 941-991; the sequence is TLIKVSKTLHHKMLRSILQAPMSTFNTLKAGRILNRFSKDIAILDDLLPLT. The chain crosses the membrane as a helical span at residues 992–1012; the sequence is MFDFIQLLLIVIGAVVVVSVL. Residues 1013 to 1014 are Extracellular-facing; sequence QP. A helical membrane pass occupies residues 1015–1035; it reads YIFLATVPVIAAFIILRAYFL. Topologically, residues 1036–1096 are cytoplasmic; it reads HTSQQLKQLE…TANWFLYLST (61 aa). The chain crosses the membrane as a helical span at residues 1097–1117; it reads LRWFQMRIEIIFVIFFIAVTF. The Extracellular segment spans residues 1118–1131; it reads VSILTTGEGEGTIG. Residues 1132-1152 traverse the membrane as a helical segment; it reads IILTLAMNIMNTLQWAVNSSI. At 1153–1482 the chain is on the cytoplasmic side; the sequence is DVDSLMRSVS…TEEEVQETRL (330 aa). In terms of domain architecture, ABC transporter 2 spans 1212–1445; it reads MTVKDLTAKY…KSLFRQAISP (234 aa). ATP contacts are provided by residues Y1221 and 1246–1253; that span reads GRTGSGKS. Residues 1388–1482 form an interaction with GORASP2 region; sequence RTLKQAFADC…TEEEVQETRL (95 aa). Residue C1397 is the site of S-palmitoyl cysteine attachment. A compositionally biased stretch (basic residues) spans 1454-1463; the sequence is HRNSSRHRSR. Residues 1454–1482 are disordered; sequence HRNSSRHRSRSQIAALKEETEEEVQETRL. Phosphoserine is present on S1458. Positions 1472-1482 are enriched in acidic residues; it reads ETEEEVQETRL. The short motif at 1480-1482 is the PDZ-binding element; sequence TRL.

It belongs to the ABC transporter superfamily. ABCC family. CFTR transporter (TC 3.A.1.202) subfamily. In terms of assembly, monomer; does not require oligomerization for channel activity. May form oligomers in the membrane. Interacts with SLC26A3, SLC26A6 and NHERF1. Interacts with SHANK2. Interacts with MYO6. Interacts (via C-terminus) with GOPC (via PDZ domain); this promotes CFTR internalization and thereby decreases channel activity. Interacts with SLC4A7 through NHERF1. Found in a complex with MYO5B and RAB11A. Interacts with ANO1. Interacts with SLC26A8. Interacts with AHCYL1; the interaction increases CFTR activity. Interacts with CSE1L. The core-glycosylated form interacts with GORASP2 (via PDZ GRASP-type 1 domain) in respone to ER stress. Interacts with MARCHF2; the interaction leads to CFTR ubiqtuitination and degradation. Interacts with ADGRG2. N-glycosylated. Post-translationally, phosphorylated; cAMP treatment promotes phosphorylation and activates the channel. Dephosphorylation decreases the ATPase activity (in vitro). Phosphorylation at PKA sites activates the channel. Phosphorylation at PKC sites enhances the response to phosphorylation by PKA. Phosphorylated by AMPK; this inhibits channel activity. In terms of processing, ubiquitinated, leading to its degradation in the lysosome. Deubiquitination by USP10 in early endosomes enhances its endocytic recycling to the cell membrane. Ubiquitinated by RNF185 during ER stress. Ubiquitinated by MARCHF2.

It localises to the apical cell membrane. The protein resides in the early endosome membrane. Its subcellular location is the cell membrane. It is found in the recycling endosome membrane. The protein localises to the endoplasmic reticulum membrane. It localises to the nucleus. It catalyses the reaction ATP + H2O + closed Cl(-) channel = ADP + phosphate + open Cl(-) channel.. The enzyme catalyses chloride(in) = chloride(out). It carries out the reaction hydrogencarbonate(in) = hydrogencarbonate(out). The catalysed reaction is ATP + H2O = ADP + phosphate + H(+). In terms of biological role, epithelial ion channel that plays an important role in the regulation of epithelial ion and water transport and fluid homeostasis. Mediates the transport of chloride ions across the cell membrane. Possesses an intrinsic ATPase activity and utilizes ATP to gate its channel; the passive flow of anions through the channel is gated by cycles of ATP binding and hydrolysis by the ATP-binding domains. The ion channel is also permeable to HCO(3)(-); selectivity depends on the extracellular chloride concentration. Exerts its function also by modulating the activity of other ion channels and transporters. Contributes to the regulation of the pH and the ion content of the epithelial fluid layer. Modulates the activity of the epithelial sodium channel (ENaC) complex, in part by regulating the cell surface expression of the ENaC complex. May regulate bicarbonate secretion and salvage in epithelial cells by regulating the transporter SLC4A7. Can inhibit the chloride channel activity of ANO1. Plays a role in the chloride and bicarbonate homeostasis during sperm epididymal maturation and capacitation. This is Cystic fibrosis transmembrane conductance regulator from Loxodonta africana (African elephant).